Reading from the N-terminus, the 328-residue chain is Beta-ketoacyl-[acyl-carrier-protein] synthase III (328 aa).

Active-site residues include C122 and H255. An ACP-binding region spans residues 256–260; the sequence is QANIR. N285 is a catalytic residue.

The protein belongs to the thiolase-like superfamily. FabH family. In terms of assembly, homodimer.

It localises to the cytoplasm. It carries out the reaction malonyl-[ACP] + acetyl-CoA + H(+) = 3-oxobutanoyl-[ACP] + CO2 + CoA. The protein operates within lipid metabolism; fatty acid biosynthesis. In terms of biological role, catalyzes the condensation reaction of fatty acid synthesis by the addition to an acyl acceptor of two carbons from malonyl-ACP. Catalyzes the first condensation reaction which initiates fatty acid synthesis and may therefore play a role in governing the total rate of fatty acid production. Possesses both acetoacetyl-ACP synthase and acetyl transacylase activities. Its substrate specificity determines the biosynthesis of branched-chain and/or straight-chain of fatty acids. The protein is Beta-ketoacyl-[acyl-carrier-protein] synthase III of Herminiimonas arsenicoxydans.